The chain runs to 295 residues: Glutamyl-Q tRNA(Asp) synthetase (295 aa).

L-glutamate contacts are provided by residues 9 to 13 (RFAPT) and E45. Positions 12–22 (PTPSGYLHFGS) match the 'HIGH' region motif. Positions 101, 103, 115, and 119 each coordinate Zn(2+). Residues Y172 and R190 each coordinate L-glutamate. A 'KMSKS' region motif is present at residues 228–232 (KLGKS). K231 is a binding site for ATP.

Belongs to the class-I aminoacyl-tRNA synthetase family. GluQ subfamily. Requires Zn(2+) as cofactor.

Catalyzes the tRNA-independent activation of glutamate in presence of ATP and the subsequent transfer of glutamate onto a tRNA(Asp). Glutamate is transferred on the 2-amino-5-(4,5-dihydroxy-2-cyclopenten-1-yl) moiety of the queuosine in the wobble position of the QUC anticodon. The polypeptide is Glutamyl-Q tRNA(Asp) synthetase (Pseudomonas syringae pv. syringae (strain B728a)).